A 59-amino-acid polypeptide reads, in one-letter code: Kunitz-type serine protease inhibitor BmKTT-1 (59 aa).

The region spanning 4-54 (CSLPVDTGRGKGWFLRYYYNKNSKTCESFIYGGVGGNKNNFLNIENCCKIC) is the BPTI/Kunitz inhibitor domain. 3 disulfide bridges follow: Cys4–Cys54, Cys29–Cys50, and Cys51–Cys59.

The protein belongs to the venom Kunitz-type family. Scorpion delta-Ktx subfamily. Delta-Ktx 2 sub-subfamily. Expressed by the venom gland.

The protein localises to the secreted. In terms of biological role, dual-function toxin that completely inhibits trypsin activity at a molar ratio of 1:1 (Ki=136 nM) and that inhibits mKv1.3/KCNA3 potassium channel currents (IC(50)=129.7 nM). The protein is Kunitz-type serine protease inhibitor BmKTT-1 of Olivierus martensii (Manchurian scorpion).